Here is a 277-residue protein sequence, read N- to C-terminus: Large ribosomal subunit protein uL2 (277 aa).

Residues 222–265 are disordered; that stretch reads GVAMNPIDHPHGGGEGRTSGGRHPVTPWGKPTKGKKTRTNKSTD.

It belongs to the universal ribosomal protein uL2 family. Part of the 50S ribosomal subunit. Forms a bridge to the 30S subunit in the 70S ribosome.

In terms of biological role, one of the primary rRNA binding proteins. Required for association of the 30S and 50S subunits to form the 70S ribosome, for tRNA binding and peptide bond formation. It has been suggested to have peptidyltransferase activity; this is somewhat controversial. Makes several contacts with the 16S rRNA in the 70S ribosome. This Bradyrhizobium sp. (strain BTAi1 / ATCC BAA-1182) protein is Large ribosomal subunit protein uL2.